A 108-amino-acid chain; its full sequence is Glutaredoxin-1 (108 aa).

The region spanning 3–106 is the Glutaredoxin domain; the sequence is EEFVQQRLAN…DILSSIGVLR (104 aa). C23 and C26 are oxidised to a cystine.

The protein belongs to the glutaredoxin family.

The protein localises to the virion. In terms of biological role, has thioltransferase and dehydroascorbate reductase activities. This is Glutaredoxin-1 (OPG075) from Camelpox virus (strain M-96).